The following is a 234-amino-acid chain: Lipoprotein-releasing system ATP-binding protein LolD 1 (234 aa).

The 227-residue stretch at Ile-5–Gly-231 folds into the ABC transporter domain. Position 41–48 (Gly-41–Ser-48) interacts with ATP.

Belongs to the ABC transporter superfamily. Lipoprotein translocase (TC 3.A.1.125) family. In terms of assembly, the complex is composed of two ATP-binding proteins (LolD) and two transmembrane proteins (LolC and LolE).

Its subcellular location is the cell inner membrane. Functionally, part of the ABC transporter complex LolCDE involved in the translocation of mature outer membrane-directed lipoproteins, from the inner membrane to the periplasmic chaperone, LolA. Responsible for the formation of the LolA-lipoprotein complex in an ATP-dependent manner. In Caulobacter vibrioides (strain ATCC 19089 / CIP 103742 / CB 15) (Caulobacter crescentus), this protein is Lipoprotein-releasing system ATP-binding protein LolD 1.